Reading from the N-terminus, the 218-residue chain is Ribosomal RNA small subunit methyltransferase G (218 aa).

Residues Gly-82, Leu-87, 133–134, and Arg-147 contribute to the S-adenosyl-L-methionine site; that span reads VE.

It belongs to the methyltransferase superfamily. RNA methyltransferase RsmG family.

The protein resides in the cytoplasm. It catalyses the reaction guanosine(527) in 16S rRNA + S-adenosyl-L-methionine = N(7)-methylguanosine(527) in 16S rRNA + S-adenosyl-L-homocysteine. Its function is as follows. Specifically methylates the N7 position of guanine in position 527 of 16S rRNA. This chain is Ribosomal RNA small subunit methyltransferase G, found in Leptothrix cholodnii (strain ATCC 51168 / LMG 8142 / SP-6) (Leptothrix discophora (strain SP-6)).